A 90-amino-acid polypeptide reads, in one-letter code: Small ribosomal subunit protein uS15c (90 aa).

The span at 1–11 (MVKNSFSSVIS) shows a compositional bias: polar residues. The interval 1–20 (MVKNSFSSVISQEEKKENGG) is disordered.

Belongs to the universal ribosomal protein uS15 family. Part of the 30S ribosomal subunit.

Its subcellular location is the plastid. It is found in the chloroplast. This chain is Small ribosomal subunit protein uS15c (rps15), found in Cucumis sativus (Cucumber).